The primary structure comprises 160 residues: Sulfur-rich protein (160 aa).

2 helical membrane-spanning segments follow: residues 63 to 83 and 92 to 112; these read ITMI…TFVL and FLFL…SVFM.

Its subcellular location is the membrane. In Chlamydia abortus (strain DSM 27085 / S26/3) (Chlamydophila abortus), this protein is Sulfur-rich protein (srp).